The following is a 440-amino-acid chain: tRNA(Ile)-lysidine synthase (440 aa).

31–36 (SGGADS) contributes to the ATP binding site.

The protein belongs to the tRNA(Ile)-lysidine synthase family.

Its subcellular location is the cytoplasm. It carries out the reaction cytidine(34) in tRNA(Ile2) + L-lysine + ATP = lysidine(34) in tRNA(Ile2) + AMP + diphosphate + H(+). Ligates lysine onto the cytidine present at position 34 of the AUA codon-specific tRNA(Ile) that contains the anticodon CAU, in an ATP-dependent manner. Cytidine is converted to lysidine, thus changing the amino acid specificity of the tRNA from methionine to isoleucine. The sequence is that of tRNA(Ile)-lysidine synthase from Borrelia garinii subsp. bavariensis (strain ATCC BAA-2496 / DSM 23469 / PBi) (Borreliella bavariensis).